The chain runs to 232 residues: Ion-translocating oxidoreductase complex subunit E (232 aa).

A run of 6 helical transmembrane segments spans residues 18–38, 39–59, 69–89, 93–113, 127–147, and 182–202; these read GLVQLLGLCPLLAVTATITNA, LGLGVATMLVLIGSNILVSLV, IPVFVMIIAALVTTVQLLINA, GLYLSLGIFLPLIVTNCIIIG, AAFDGLMMGLGFTLVLAVLGA, and PFLLAMLPPGAFIVMGLLIAL.

Belongs to the NqrDE/RnfAE family. As to quaternary structure, the complex is composed of six subunits: RnfA, RnfB, RnfC, RnfD, RnfE and RnfG.

The protein resides in the cell inner membrane. Part of a membrane-bound complex that couples electron transfer with translocation of ions across the membrane. The sequence is that of Ion-translocating oxidoreductase complex subunit E from Shewanella sp. (strain W3-18-1).